A 297-amino-acid chain; its full sequence is Proline iminopeptidase (297 aa).

The region spanning 26–131 (VLLLHGGPAM…GLLVSNMMAS (106 aa)) is the AB hydrolase-1 domain. Serine 103 functions as the Nucleophile in the catalytic mechanism. The active site involves aspartate 243. Histidine 270 acts as the Proton donor in catalysis.

Belongs to the peptidase S33 family. Monomer.

The catalysed reaction is Release of N-terminal proline from a peptide.. Releases the N-terminal proline from various substrates. The protein is Proline iminopeptidase (fpaP) of Flavobacterium johnsoniae (strain ATCC 17061 / DSM 2064 / JCM 8514 / BCRC 14874 / CCUG 350202 / NBRC 14942 / NCIMB 11054 / UW101) (Cytophaga johnsonae).